We begin with the raw amino-acid sequence, 220 residues long: Vesicle-associated protein 2-1 (220 aa).

Met1 carries the N-acetylmethionine modification. At 1 to 196 the chain is on the cytoplasmic side; that stretch reads MTGVGENQLI…RNSGNGLSLK (196 aa). Thr2 bears the N-acetylthreonine; in Vesicle-associated protein 2-1, N-terminally processed mark. The MSP domain maps to 9–129; it reads LISIQPDELK…TECKLKVSYI (121 aa). A disordered region spans residues 133–154; sequence TTQRSSESGATNGDGQSSETIS. The stretch at 153–188 forms a coiled coil; that stretch reads ISTIQRLKEERDAAVKQTQQLQHELETVRRRRNQRN. Residues 197–217 form a helical; Anchor for type IV membrane protein membrane-spanning segment; it reads LAAMVGLIGLIIGFILKLTLA.

The protein belongs to the VAMP-associated protein (VAP) (TC 9.B.17) family.

The protein resides in the endoplasmic reticulum membrane. Its function is as follows. May play a role in vesicle trafficking. In Arabidopsis thaliana (Mouse-ear cress), this protein is Vesicle-associated protein 2-1 (PVA21).